Here is a 2353-residue protein sequence, read N- to C-terminus: Nonribosomal peptide synthetase 7 (2353 aa).

The adenylation 1 stretch occupies residues 305–684 (TFSALNTRAN…AIEEVEDSAV (380 aa)). A Carrier 1 domain is found at 776–853 (RDLTDSEKVV…QVAAAVQPQP (78 aa)). An O-(pantetheine 4'-phosphoryl)serine modification is found at Ser813. The tract at residues 885 to 1147 (EDAFPVTPFQ…LMVAPLRVKV (263 aa)) is condensation 1. The interval 1338–1725 (TYAGLAIKMN…QTNVFRQCAV (388 aa)) is adenylation 2. The Carrier 2 domain occupies 1826–1902 (EICSEAEREL…EQAALMVQGQ (77 aa)). Residue Ser1863 is modified to O-(pantetheine 4'-phosphoryl)serine. Residues 1939 to 2214 (EDIYPCSPGQ…NGNCANFLPY (276 aa)) are condensation 2.

Belongs to the NRP synthetase family.

Nonribosomal peptide synthesis (NRPS) is a key mechanism responsible for the biosynthesis of bioactive metabolites which are potentially contributing to organismal virulence. This is Nonribosomal peptide synthetase 7 (NRPS7) from Aspergillus fumigatus (strain ATCC MYA-4609 / CBS 101355 / FGSC A1100 / Af293) (Neosartorya fumigata).